The following is a 601-amino-acid chain: Tripeptidyl-peptidase SED4 (601 aa).

The first 22 residues, 1 to 22 (MVSFTLRAIGACLVSLPALVTA), serve as a signal peptide directing secretion. A propeptide spans 23–202 (APTSHISGDF…SVFTSDLEIT (180 aa)) (removed in mature form). N-linked (GlcNAc...) asparagine glycosylation is found at Asn210 and Asn281. Positions 212–601 (TITPDCIRDL…ETLSKLVLQY (390 aa)) constitute a Peptidase S53 domain. Catalysis depends on charge relay system residues Glu288 and Asp292. Asn323 carries an N-linked (GlcNAc...) asparagine glycan. The active-site Charge relay system is Ser504. Ca(2+)-binding residues include Asp546 and Ile547. N-linked (GlcNAc...) asparagine glycosylation is present at Asn575. 2 residues coordinate Ca(2+): Gly579 and Asp581.

Requires Ca(2+) as cofactor.

The protein resides in the secreted. It is found in the extracellular space. It carries out the reaction Release of an N-terminal tripeptide from a polypeptide.. Functionally, secreted tripeptidyl-peptidase which degrades proteins at acidic pHs and is involved in virulence. The protein is Tripeptidyl-peptidase SED4 (SED4) of Arthroderma otae (strain ATCC MYA-4605 / CBS 113480) (Microsporum canis).